The chain runs to 180 residues: Translation initiation factor IF-3 (180 aa).

Belongs to the IF-3 family. In terms of assembly, monomer.

It localises to the cytoplasm. Its function is as follows. IF-3 binds to the 30S ribosomal subunit and shifts the equilibrium between 70S ribosomes and their 50S and 30S subunits in favor of the free subunits, thus enhancing the availability of 30S subunits on which protein synthesis initiation begins. This is Translation initiation factor IF-3 from Shewanella oneidensis (strain ATCC 700550 / JCM 31522 / CIP 106686 / LMG 19005 / NCIMB 14063 / MR-1).